The chain runs to 345 residues: Carbamoyl phosphate synthase small chain (345 aa).

The segment at 1–169 (MKKYLVMEDG…FVKGEEGGTV (169 aa)) is CPSase. L-glutamine contacts are provided by Ser45, Gly213, and Gly215. The Glutamine amidotransferase type-1 domain maps to 168-345 (TVLFIDLGSK…GEMKRRIGYA (178 aa)). Cys242 functions as the Nucleophile in the catalytic mechanism. L-glutamine is bound by residues Phe243, Gln246, Asn282, Gly284, and Tyr285. Residues His321 and Glu323 contribute to the active site.

The protein belongs to the CarA family. In terms of assembly, composed of two chains; the small (or glutamine) chain promotes the hydrolysis of glutamine to ammonia, which is used by the large (or ammonia) chain to synthesize carbamoyl phosphate. Tetramer of heterodimers (alpha,beta)4.

It carries out the reaction hydrogencarbonate + L-glutamine + 2 ATP + H2O = carbamoyl phosphate + L-glutamate + 2 ADP + phosphate + 2 H(+). The enzyme catalyses L-glutamine + H2O = L-glutamate + NH4(+). The protein operates within amino-acid biosynthesis; L-arginine biosynthesis; carbamoyl phosphate from bicarbonate: step 1/1. It functions in the pathway pyrimidine metabolism; UMP biosynthesis via de novo pathway; (S)-dihydroorotate from bicarbonate: step 1/3. In terms of biological role, small subunit of the glutamine-dependent carbamoyl phosphate synthetase (CPSase). CPSase catalyzes the formation of carbamoyl phosphate from the ammonia moiety of glutamine, carbonate, and phosphate donated by ATP, constituting the first step of 2 biosynthetic pathways, one leading to arginine and/or urea and the other to pyrimidine nucleotides. The small subunit (glutamine amidotransferase) binds and cleaves glutamine to supply the large subunit with the substrate ammonia. This is Carbamoyl phosphate synthase small chain from Thermoplasma volcanium (strain ATCC 51530 / DSM 4299 / JCM 9571 / NBRC 15438 / GSS1).